Reading from the N-terminus, the 241-residue chain is Ribonuclease HII (241 aa).

The RNase H type-2 domain occupies 27-227; the sequence is GPVAGVDEAG…REARSLRLED (201 aa). A divalent metal cation is bound by residues D33, E34, and D128.

This sequence belongs to the RNase HII family. Mn(2+) serves as cofactor. Requires Mg(2+) as cofactor.

The protein resides in the cytoplasm. The enzyme catalyses Endonucleolytic cleavage to 5'-phosphomonoester.. Endonuclease that specifically degrades the RNA of RNA-DNA hybrids. This is Ribonuclease HII from Frankia alni (strain DSM 45986 / CECT 9034 / ACN14a).